The sequence spans 427 residues: UDP-N-acetyl-D-mannosamine dehydrogenase (427 aa).

NAD(+)-binding residues include Y20, I21, D40, R45, T92, and T130. UDP-N-acetyl-alpha-D-mannosaminouronate contacts are provided by R157, V158, K209, N213, R216, H247, R249, and G260. K209 functions as the Proton donor/acceptor in the catalytic mechanism. C263 acts as the Nucleophile in catalysis. UDP-N-acetyl-alpha-D-mannosaminouronate-binding residues include Y317 and K318. Residue R325 coordinates NAD(+). A UDP-N-acetyl-alpha-D-mannosaminouronate-binding site is contributed by K403.

It belongs to the UDP-glucose/GDP-mannose dehydrogenase family. Homotetramer; probably dimer of dimers.

The catalysed reaction is UDP-N-acetyl-alpha-D-mannosamine + 2 NAD(+) + H2O = UDP-N-acetyl-alpha-D-mannosaminouronate + 2 NADH + 3 H(+). Its function is as follows. Catalyzes the four-electron oxidation of UDP-N-acetyl-D-mannosamine (UDP-ManNAc), reducing NAD(+) and releasing UDP-N-acetylmannosaminuronic acid (UDP-ManNAcA). In Methanocaldococcus jannaschii (strain ATCC 43067 / DSM 2661 / JAL-1 / JCM 10045 / NBRC 100440) (Methanococcus jannaschii), this protein is UDP-N-acetyl-D-mannosamine dehydrogenase (wecC).